The chain runs to 73 residues: Large ribosomal subunit protein bL28 (73 aa).

This sequence belongs to the bacterial ribosomal protein bL28 family.

The protein is Large ribosomal subunit protein bL28 of Anaeromyxobacter dehalogenans (strain 2CP-1 / ATCC BAA-258).